The sequence spans 303 residues: Phosphatidylglycerol--prolipoprotein diacylglyceryl transferase (303 aa).

The next 4 helical transmembrane spans lie at 18–38, 58–78, 106–126, and 133–153; these read LGPFSLRWYGLLIAISVLVGL, LLPILVLASVIGARIYYVAFE, IWGGGIAIHGALIMGTLSIIF, and EHFWDVIDVLVPSVALGQAIG. Arginine 154 is an a 1,2-diacyl-sn-glycero-3-phospho-(1'-sn-glycerol) binding site. Transmembrane regions (helical) follow at residues 193–213, 223–243, and 266–286; these read PTFLYESVWNIFVFGILIFLF, LPPGSLSCLYLITYSLGRFWI, and IAQLISLFLISAGLLGIWRIY.

This sequence belongs to the Lgt family.

The protein resides in the cell inner membrane. It catalyses the reaction L-cysteinyl-[prolipoprotein] + a 1,2-diacyl-sn-glycero-3-phospho-(1'-sn-glycerol) = an S-1,2-diacyl-sn-glyceryl-L-cysteinyl-[prolipoprotein] + sn-glycerol 1-phosphate + H(+). The protein operates within protein modification; lipoprotein biosynthesis (diacylglyceryl transfer). In terms of biological role, catalyzes the transfer of the diacylglyceryl group from phosphatidylglycerol to the sulfhydryl group of the N-terminal cysteine of a prolipoprotein, the first step in the formation of mature lipoproteins. The chain is Phosphatidylglycerol--prolipoprotein diacylglyceryl transferase from Prochlorococcus marinus (strain NATL2A).